The chain runs to 427 residues: Gamma-glutamyl phosphate reductase (427 aa).

The protein belongs to the gamma-glutamyl phosphate reductase family.

The protein localises to the cytoplasm. It catalyses the reaction L-glutamate 5-semialdehyde + phosphate + NADP(+) = L-glutamyl 5-phosphate + NADPH + H(+). It participates in amino-acid biosynthesis; L-proline biosynthesis; L-glutamate 5-semialdehyde from L-glutamate: step 2/2. Functionally, catalyzes the NADPH-dependent reduction of L-glutamate 5-phosphate into L-glutamate 5-semialdehyde and phosphate. The product spontaneously undergoes cyclization to form 1-pyrroline-5-carboxylate. This Rhizobium rhizogenes (strain K84 / ATCC BAA-868) (Agrobacterium radiobacter) protein is Gamma-glutamyl phosphate reductase.